The sequence spans 603 residues: Aquaporin-2 (603 aa).

A helical membrane pass occupies residues 40–70 (SLKKYKYNLFFEFIGSFLFVFFISIYMLNSN). 2 stretches are compositionally biased toward basic and acidic residues: residues 135-149 (NNKSKREVERDDDKI) and 156-190 (EFEKDNEKKKNYDNINEKEISTTSDGKIKDMEDPK). A disordered region spans residues 135–200 (NNKSKREVER…NISNKNENYD (66 aa)). The span at 191 to 200 (NISNKNENYD) shows a compositional bias: polar residues. 5 helical membrane-spanning segments follow: residues 282-299 (HAIYSFVGCFIYVIFILL), 321-346 (FALSTLYITFQYFGGIVASIICAHLY), 360-393 (IIKTFLCEFISTFLITLLLLSLYNYKKKFMEENK), 442-471 (NKYIKYIMNHIFYLLFIFFSLLFFVFVTNT), and 509-542 (ITKIFQLLIFYIQSLPLWIGPYFGSAFAATFLSL).

The protein belongs to the MIP/aquaporin (TC 1.A.8) family.

Its subcellular location is the endomembrane system. The enzyme catalyses H2O(in) = H2O(out). It carries out the reaction glycerol(in) = glycerol(out). Required for sporozoite development in the mosquito vector. In Plasmodium falciparum (isolate NF54), this protein is Aquaporin-2.